Here is a 344-residue protein sequence, read N- to C-terminus: Protein-glutamate methylesterase/protein-glutamine glutaminase 1 (344 aa).

The 118-residue stretch at 5–122 folds into the Response regulatory domain; that stretch reads RVLVVDDSAT…GTQEALAEIV (118 aa). Aspartate 56 carries the 4-aspartylphosphate modification. One can recognise a CheB-type methylesterase domain in the interval 151–343; sequence FMPSGDIVAI…QSILDLASAR (193 aa). Residues serine 163, histidine 189, and aspartate 285 contribute to the active site.

Belongs to the CheB family. In terms of processing, phosphorylated by CheA. Phosphorylation of the N-terminal regulatory domain activates the methylesterase activity.

It localises to the cytoplasm. It catalyses the reaction [protein]-L-glutamate 5-O-methyl ester + H2O = L-glutamyl-[protein] + methanol + H(+). It carries out the reaction L-glutaminyl-[protein] + H2O = L-glutamyl-[protein] + NH4(+). Involved in chemotaxis. Part of a chemotaxis signal transduction system that modulates chemotaxis in response to various stimuli. Catalyzes the demethylation of specific methylglutamate residues introduced into the chemoreceptors (methyl-accepting chemotaxis proteins or MCP) by CheR. Also mediates the irreversible deamidation of specific glutamine residues to glutamic acid. The protein is Protein-glutamate methylesterase/protein-glutamine glutaminase 1 of Caulobacter vibrioides (strain ATCC 19089 / CIP 103742 / CB 15) (Caulobacter crescentus).